Consider the following 883-residue polypeptide: Phosphoenolpyruvate carboxylase (883 aa).

Catalysis depends on residues His141 and Lys547.

The protein belongs to the PEPCase type 1 family. The cofactor is Mg(2+).

It carries out the reaction oxaloacetate + phosphate = phosphoenolpyruvate + hydrogencarbonate. In terms of biological role, forms oxaloacetate, a four-carbon dicarboxylic acid source for the tricarboxylic acid cycle. The sequence is that of Phosphoenolpyruvate carboxylase from Chromohalobacter salexigens (strain ATCC BAA-138 / DSM 3043 / CIP 106854 / NCIMB 13768 / 1H11).